The sequence spans 120 residues: BLOC-1-related complex subunit 8 (120 aa).

The interval 101 to 120 (MNTSAQGHSQEKLSPPPSLA) is disordered. Position 109 is a phosphoserine (Ser109).

This sequence belongs to the BORCS8 family. As to quaternary structure, component of the BLOC-one-related complex (BORC) which is composed of BLOC1S1, BLOC1S2, BORCS5, BORCS6, BORCS7, BORCS8, KXD1 and SNAPIN.

It localises to the lysosome membrane. As part of the BLOC-one-related complex (BORC), it plays a role in the movement and localization of lysosomes at the cell periphery. Associated with the cytosolic face of lysosomes, BORC recruits ARL8B to the lysosomal membrane and couples lysosomes to microtubule plus-end-directed kinesin motors, driving lysosome movement toward the cell periphery. This is BLOC-1-related complex subunit 8 from Mus musculus (Mouse).